We begin with the raw amino-acid sequence, 396 residues long: Elongation factor Tu (396 aa).

A tr-type G domain is found at 10–206; it reads KPHCNIGTIG…EVDAYIPQPE (197 aa). Residues 19 to 26 are G1; the sequence is GHVDHGKT. GTP is bound at residue 19-26; it reads GHVDHGKT. T26 contacts Mg(2+). The tract at residues 60–64 is G2; the sequence is GITIS. Residues 81-84 are G3; it reads DCPG. Residues 81–85 and 136–139 contribute to the GTP site; these read DCPGH and NKCD. The interval 136 to 139 is G4; it reads NKCD. Residues 174-176 form a G5 region; that stretch reads SAL.

The protein belongs to the TRAFAC class translation factor GTPase superfamily. Classic translation factor GTPase family. EF-Tu/EF-1A subfamily. In terms of assembly, monomer.

Its subcellular location is the cytoplasm. The enzyme catalyses GTP + H2O = GDP + phosphate + H(+). In terms of biological role, GTP hydrolase that promotes the GTP-dependent binding of aminoacyl-tRNA to the A-site of ribosomes during protein biosynthesis. This Paramagnetospirillum magneticum (strain ATCC 700264 / AMB-1) (Magnetospirillum magneticum) protein is Elongation factor Tu.